A 139-amino-acid polypeptide reads, in one-letter code: MAMSFSGAVLTGMASSFHSGAKQSSFGAVRVGQKTQFVVVSQRKKSLIYAAKGDGNILDDLNEATKKASDFVTDKTKEALADGEKAKDYVVEKNSETADTLGKEAEKAAAYVEEKGKEAANKAAEFAEGKAGEAKDATK.

A chloroplast-targeting transit peptide spans 1–40 (MAMSFSGAVLTGMASSFHSGAKQSSFGAVRVGQKTQFVVV).

Belongs to the COR15 protein family. Forms homooligomers which interact with potential stromal substrates in the stroma of chloroplasts. Interacts with the galactose headgroup of the chloroplast lipid monogalactosyldiacylglycerol (MGDG).

It localises to the plastid. Its subcellular location is the chloroplast stroma. In terms of biological role, exhibits cryoprotective activity toward stromal substrates (e.g. LDH and rubisco) in chloroplasts and in protoplasts and confers freezing tolerance to plants in a CBF-dependent manner. Protectant against various stresses (e.g. cold, drought and heat stress) by preventing protein aggregation (e.g. LDH) and attenuating enzyme inactivation. Influences the intrinsic curvature of the inner membrane of the chloroplast envelope, and modulates the freeze-induced lamellar-to-hexagonal II phase transitions that occur in regions where the plasma membrane is brought into close apposition with the chloroplast envelope during freeze-induced osmotic contraction. Mediates a shift in the melting curves of phospholipids-containing membranes to lower temperatures. Involved in the regulation of leaf senescence by abscisic acid (ABA) in a VNI2-dependent manner. This Arabidopsis thaliana (Mouse-ear cress) protein is Protein COLD-REGULATED 15A, chloroplastic.